The primary structure comprises 388 residues: Cytochrome b (388 aa).

4 helical membrane passes run 32 to 52 (FGSL…TLAM), 76 to 98 (WLIR…LHVG), 113 to 133 (TWTI…LGYV), and 179 to 199 (FFAL…MHLI). His-82 and His-96 together coordinate heme b. Heme b is bound by residues His-183 and His-197. Residue His-202 coordinates a ubiquinone. The next 4 membrane-spanning stretches (helical) occupy residues 226–246 (FIFK…IFIF), 290–310 (LLGV…PITD), 322–342 (LSKI…QLGA), and 349–369 (FIEF…IIVP).

This sequence belongs to the cytochrome b family. Fungal cytochrome b-c1 complex contains 10 subunits; 3 respiratory subunits, 2 core proteins and 5 low-molecular weight proteins. Cytochrome b-c1 complex is a homodimer. Heme b is required as a cofactor.

The protein localises to the mitochondrion inner membrane. Its function is as follows. Component of the ubiquinol-cytochrome c reductase complex (complex III or cytochrome b-c1 complex) that is part of the mitochondrial respiratory chain. The b-c1 complex mediates electron transfer from ubiquinol to cytochrome c. Contributes to the generation of a proton gradient across the mitochondrial membrane that is then used for ATP synthesis. The sequence is that of Cytochrome b (cob) from Zymoseptoria tritici (Speckled leaf blotch fungus).